The sequence spans 273 residues: Phosphate import ATP-binding protein PstB (273 aa).

The 240-residue stretch at Ile-18–Asn-257 folds into the ABC transporter domain. Position 50–57 (Gly-50–Ser-57) interacts with ATP.

This sequence belongs to the ABC transporter superfamily. Phosphate importer (TC 3.A.1.7) family. As to quaternary structure, the complex is composed of two ATP-binding proteins (PstB), two transmembrane proteins (PstC and PstA) and a solute-binding protein (PstS).

It localises to the cell inner membrane. The enzyme catalyses phosphate(out) + ATP + H2O = ADP + 2 phosphate(in) + H(+). Part of the ABC transporter complex PstSACB involved in phosphate import. Responsible for energy coupling to the transport system. The protein is Phosphate import ATP-binding protein PstB of Prochlorococcus marinus (strain SARG / CCMP1375 / SS120).